A 179-amino-acid polypeptide reads, in one-letter code: Large ribosomal subunit protein uL6 (179 aa).

This sequence belongs to the universal ribosomal protein uL6 family. In terms of assembly, part of the 50S ribosomal subunit.

This protein binds to the 23S rRNA, and is important in its secondary structure. It is located near the subunit interface in the base of the L7/L12 stalk, and near the tRNA binding site of the peptidyltransferase center. This Pseudomonas savastanoi pv. phaseolicola (strain 1448A / Race 6) (Pseudomonas syringae pv. phaseolicola (strain 1448A / Race 6)) protein is Large ribosomal subunit protein uL6.